Reading from the N-terminus, the 411-residue chain is 2,3-bisphosphoglycerate-independent phosphoglycerate mutase (411 aa).

Belongs to the BPG-independent phosphoglycerate mutase family. A-PGAM subfamily.

It carries out the reaction (2R)-2-phosphoglycerate = (2R)-3-phosphoglycerate. It functions in the pathway carbohydrate degradation; glycolysis; pyruvate from D-glyceraldehyde 3-phosphate: step 3/5. Its function is as follows. Catalyzes the interconversion of 2-phosphoglycerate and 3-phosphoglycerate. In Pyrobaculum neutrophilum (strain DSM 2338 / JCM 9278 / NBRC 100436 / V24Sta) (Thermoproteus neutrophilus), this protein is 2,3-bisphosphoglycerate-independent phosphoglycerate mutase.